Reading from the N-terminus, the 122-residue chain is Large ribosomal subunit protein uL14 (122 aa).

Belongs to the universal ribosomal protein uL14 family. As to quaternary structure, part of the 50S ribosomal subunit. Forms a cluster with proteins L3 and L19. In the 70S ribosome, L14 and L19 interact and together make contacts with the 16S rRNA in bridges B5 and B8.

Binds to 23S rRNA. Forms part of two intersubunit bridges in the 70S ribosome. The protein is Large ribosomal subunit protein uL14 of Microcystis aeruginosa (strain NIES-843 / IAM M-2473).